The primary structure comprises 486 residues: Elastin-binding protein EbpS (486 aa).

Basic and acidic residues predominate over residues 1–40; the sequence is MSNNFKDDFEKNRQSIDTNSHQDHTEDVEKDQSELEHQDT. The interval 1–314 is disordered; that stretch reads MSNNFKDDFE…NHDRDKERKK (314 aa). The Extracellular segment spans residues 2–204; it reads SNNFKDDFEK…ESKDHHSGKK (203 aa). The interval 14 to 34 is elastin-binding; sequence QSIDTNSHQDHTEDVEKDQSE. Positions 64-85 are enriched in polar residues; the sequence is TNHNKQVHNESQTSEDNVQNEA. Composition is skewed to basic and acidic residues over residues 103-118 and 126-149; these read EPSHQDSTPQHEEEYY and DKSHPEPIEDNDKHETIKDAENNT. Positions 150 to 166 are enriched in polar residues; the sequence is EHSTVSDKSIAEQSQQP. The span at 180-199 shows a compositional bias: basic and acidic residues; sequence SKDKHDDVTVKQDKDESKDH. Low complexity-rich tracts occupy residues 204-225 and 233-246; these read KGAAIGAGTAGVAGAAGAMGVS and DAQNKSNSDKSNNS. Residues 205-225 form a helical membrane-spanning segment; it reads GAAIGAGTAGVAGAAGAMGVS. The Cytoplasmic segment spans residues 226–319; sequence KAKKHSNDAQ…KERKKGGMAK (94 aa). Residues 247 to 259 are compositionally biased toward basic and acidic residues; it reads TEDKASQDKSKDH. Over residues 278–297 the composition is skewed to low complexity; sequence GAASKSASAASKPHASNNAS. A compositionally biased stretch (basic and acidic residues) spans 299-314; the sequence is NHDEHDNHDRDKERKK. Residues 320–340 traverse the membrane as a helical segment; that stretch reads VLLPLIAAVLIIGALAIFGGM. Topologically, residues 341-486 are extracellular; it reads ALNNHNNGTK…IRNGQQIVIP (146 aa). Residues 351–440 form a disordered region; that stretch reads ENKIANTNKN…QRQGGGQRHT (90 aa). The segment covering 361–398 has biased composition (basic and acidic residues); sequence NADESKDKDTSKDASKDKSKSTDSDKSKEDQDKATKDE. The span at 403–431 shows a compositional bias: low complexity; it reads QNNANQANNQAQNNQNQQQANQNQQQQQQ. A LysM domain is found at 437–485; the sequence is QRHTVNGQENLYRIAIQYYGSGSPENVEKIRRANGLSGNNIRNGQQIVI.

The protein localises to the cell membrane. Functionally, promotes binding of soluble elastin peptides and tropoelastin to S.aureus cells although it is not able to promote bacterial adherence to immobilized elastin and, therefore, is not a microbial surface component recognizing adhesive matrix molecule (MSCRAMM). The sequence is that of Elastin-binding protein EbpS (ebpS) from Staphylococcus aureus (strain Mu50 / ATCC 700699).